We begin with the raw amino-acid sequence, 510 residues long: Membrane-bound transcription factor site-2 protease (510 aa).

Residues 1 to 3 (MIP) lie on the Cytoplasmic side of the membrane. The helical transmembrane segment at 4–24 (VSLVVVVVGGWTAVYLADLVL) threads the bilayer. Residues 25-74 (KSSVYFKHSYEDWLEKNGLSISPFHIRWQTSVFNRAFYSWGRRKARMLYQ) lie on the Lumenal side of the membrane. 2 helical membrane-spanning segments follow: residues 75–95 (WFNF…FLLG) and 96–107 (KTLMQTLAQMMA). At 108–135 (DSPSSSSSSSSSSSSSSSSSIHNEQVLQ) the chain is on the lumenal side. The helical transmembrane segment at 136–160 (VVVPGINLPVNQLTYFFAAVLISGV) threads the bilayer. H162 contacts Zn(2+). The active site involves E163. 3 helical membrane passes run 165 to 177 (GHGI…QVRF), 178 to 200 (NGFG…TTHL), and 220 to 242 (FVLA…PFYY). H166 contacts Zn(2+). Residues 243 to 437 (TGVGVLITEV…LPVIVETFVK (195 aa)) are Lumenal-facing. A glycan (N-linked (GlcNAc...) asparagine) is linked at N328. 2 helical membrane-spanning segments follow: residues 438-455 (YLIS…VPCF) and 456-467 (ALDGQWILNSFL). At 468–483 (DATLTSVIGDNDVKDL) the chain is on the lumenal side. Residues 484-504 (IGFFILLGGSVLLAANVTLGL) form a helical membrane-spanning segment. The Cytoplasmic segment spans residues 505 to 510 (WMVTAR).

The protein belongs to the peptidase M50A family. Requires Zn(2+) as cofactor.

It localises to the membrane. It is found in the cytoplasm. The protein localises to the golgi apparatus membrane. It catalyses the reaction Cleaves several transcription factors that are type-2 transmembrane proteins within membrane-spanning domains. Known substrates include sterol regulatory element-binding protein (SREBP) -1, SREBP-2 and forms of the transcriptional activator ATF6. SREBP-2 is cleaved at the site 477-DRSRILL-|-CVLTFLCLSFNPLTSLLQWGGA-505. The residues Asn-Pro, 11 residues distal to the site of cleavage in the membrane-spanning domain, are important for cleavage by S2P endopeptidase. Replacement of either of these residues does not prevent cleavage, but there is no cleavage if both of these residues are replaced.. Zinc metalloprotease that mediates intramembrane proteolysis of proteins such as ATF6, ATF6B, SREBF1/SREBP1 and SREBF2/SREBP2. Catalyzes the second step in the proteolytic activation of the sterol regulatory element-binding proteins (SREBPs) SREBF1/SREBP1 and SREBF2/SREBP2: cleaves SREBPs within the first transmembrane segment, thereby releasing the N-terminal segment with a portion of the transmembrane segment attached. Mature N-terminal SREBP fragments shuttle to the nucleus and activate gene transcription. Also mediates the second step in the proteolytic activation of the cyclic AMP-dependent transcription factor ATF-6 (ATF6 and ATF6B). Involved in intramembrane proteolysis during bone formation. In astrocytes and osteoblasts, upon DNA damage and ER stress, mediates the second step of the regulated intramembrane proteolytic activation of the transcription factor CREB3L1, leading to the inhibition of cell-cycle progression. This chain is Membrane-bound transcription factor site-2 protease (MBTPS2), found in Cricetulus griseus (Chinese hamster).